Reading from the N-terminus, the 240-residue chain is uncharacterized protein (240 aa).

A helical membrane pass occupies residues 73–93 (LLGCLYFFIYFVAPTLGPVLF).

This sequence belongs to the universal ribosomal protein uS3 family.

It is found in the mitochondrion membrane. This is an uncharacterized protein from Arabidopsis thaliana (Mouse-ear cress).